A 288-amino-acid chain; its full sequence is Energy-coupling factor transporter ATP-binding protein EcfA2 (288 aa).

The region spanning 3–245 (IIVKNLTHIY…NASKLKDIGL (243 aa)) is the ABC transporter domain. 40–47 (GHTGSGKS) is an ATP binding site.

It belongs to the ABC transporter superfamily. Energy-coupling factor EcfA family. Forms a stable energy-coupling factor (ECF) transporter complex composed of 2 membrane-embedded substrate-binding proteins (S component), 2 ATP-binding proteins (A component) and 2 transmembrane proteins (T component).

It is found in the cell membrane. Functionally, ATP-binding (A) component of a common energy-coupling factor (ECF) ABC-transporter complex. Unlike classic ABC transporters this ECF transporter provides the energy necessary to transport a number of different substrates. This is Energy-coupling factor transporter ATP-binding protein EcfA2 from Clostridioides difficile (strain 630) (Peptoclostridium difficile).